The chain runs to 215 residues: Cytochrome b6 (215 aa).

A helical membrane pass occupies residues 32-52 (IFYCLGGITFTSFLVQVATGF). Position 35 (C35) interacts with heme c. Heme b contacts are provided by H86 and H100. 3 consecutive transmembrane segments (helical) span residues 90 to 110 (ASMM…TGGF), 116 to 136 (LTWV…VTGY), and 186 to 206 (LHTF…FLMI). Heme b-binding residues include H187 and H202.

This sequence belongs to the cytochrome b family. PetB subfamily. In terms of assembly, the 4 large subunits of the cytochrome b6-f complex are cytochrome b6, subunit IV (17 kDa polypeptide, PetD), cytochrome f and the Rieske protein, while the 4 small subunits are PetG, PetL, PetM and PetN. The complex functions as a dimer. Requires heme b as cofactor. Heme c serves as cofactor.

The protein localises to the plastid. It is found in the chloroplast thylakoid membrane. In terms of biological role, component of the cytochrome b6-f complex, which mediates electron transfer between photosystem II (PSII) and photosystem I (PSI), cyclic electron flow around PSI, and state transitions. This Oltmannsiellopsis viridis (Marine flagellate) protein is Cytochrome b6.